We begin with the raw amino-acid sequence, 141 residues long: Small ribosomal subunit protein uS12 (141 aa).

Residue D102 is modified to 3-methylthioaspartic acid. The interval 115–141 (GDASGVEKRRQQRSLYGAKRPKKEASK) is disordered.

This sequence belongs to the universal ribosomal protein uS12 family. As to quaternary structure, part of the 30S ribosomal subunit. Contacts proteins S8 and S17. May interact with IF1 in the 30S initiation complex.

With S4 and S5 plays an important role in translational accuracy. Its function is as follows. Interacts with and stabilizes bases of the 16S rRNA that are involved in tRNA selection in the A site and with the mRNA backbone. Located at the interface of the 30S and 50S subunits, it traverses the body of the 30S subunit contacting proteins on the other side and probably holding the rRNA structure together. The combined cluster of proteins S8, S12 and S17 appears to hold together the shoulder and platform of the 30S subunit. The sequence is that of Small ribosomal subunit protein uS12 from Ureaplasma parvum serovar 3 (strain ATCC 27815 / 27 / NCTC 11736).